Here is a 453-residue protein sequence, read N- to C-terminus: uncharacterized protein (453 aa).

C74, C80, C83, and C162 together coordinate [4Fe-4S] cluster. S-adenosyl-L-methionine-binding residues include Q286, Y315, E336, and D384. C411 acts as the Nucleophile in catalysis.

It belongs to the class I-like SAM-binding methyltransferase superfamily. RNA M5U methyltransferase family.

This is an uncharacterized protein from Staphylococcus aureus (strain MRSA252).